The primary structure comprises 275 residues: 2,3,4,5-tetrahydropyridine-2,6-dicarboxylate N-succinyltransferase (275 aa).

2 residues coordinate substrate: Arg106 and Asp143.

The protein belongs to the transferase hexapeptide repeat family. In terms of assembly, homotrimer.

It is found in the cytoplasm. The enzyme catalyses (S)-2,3,4,5-tetrahydrodipicolinate + succinyl-CoA + H2O = (S)-2-succinylamino-6-oxoheptanedioate + CoA. It participates in amino-acid biosynthesis; L-lysine biosynthesis via DAP pathway; LL-2,6-diaminopimelate from (S)-tetrahydrodipicolinate (succinylase route): step 1/3. The polypeptide is 2,3,4,5-tetrahydropyridine-2,6-dicarboxylate N-succinyltransferase (Burkholderia pseudomallei (strain 1106a)).